Consider the following 418-residue polypeptide: Secreted aspartic protease 5 (418 aa).

The signal sequence occupies residues 1-18; it reads MFLKNILSVLAFALLIDA. A propeptide spans 19–76 (activation peptide); sequence APVKRSPGFVTLDFNVKRSLVDPDDPTVEAKRSPLFLEFTPSEFPVDETGRDGDVDKR. One can recognise a Peptidase A1 domain in the interval 90–404; it reads YTADITVGSD…NLDDKKISMA (315 aa). The active site involves D108. Pepstatin A is bound at residue 108–110; the sequence is DTG. C123 and C135 form a disulfide bridge. 161 to 162 lines the pepstatin A pocket; sequence GD. Residue E268 coordinates Zn(2+). The active site involves D294. Residue 294–298 coordinates pepstatin A; sequence DSGTT. An intrachain disulfide couples C332 to C370.

This sequence belongs to the peptidase A1 family.

The protein localises to the secreted. It carries out the reaction Preferential cleavage at the carboxyl of hydrophobic amino acids, but fails to cleave 15-Leu-|-Tyr-16, 16-Tyr-|-Leu-17 and 24-Phe-|-Phe-25 of insulin B chain. Activates trypsinogen, and degrades keratin.. Its activity is regulated as follows. Inhibited by pepstatin A analogs. Functionally, secreted aspartic peptidases (SAPs) are a group of ten acidic hydrolases considered as key virulence factors. These enzymes supply the fungus with nutrient amino acids as well as are able to degrade the selected host's proteins involved in the immune defense. Moreover, acts toward human hemoglobin though limited proteolysis to generate a variety of antimicrobial hemocidins, enabling to compete with the other microorganisms of the same physiological niche using the microbicidal peptides generated from the host protein. This is Secreted aspartic protease 5 from Candida albicans (strain SC5314 / ATCC MYA-2876) (Yeast).